The primary structure comprises 391 residues: Formate-dependent phosphoribosylglycinamide formyltransferase (391 aa).

N(1)-(5-phospho-beta-D-ribosyl)glycinamide contacts are provided by residues 18-19 (EL) and Glu-78. ATP contacts are provided by residues Arg-110, Lys-151, 156–161 (SSGKGQ), 191–194 (EEFI), and Glu-199. An ATP-grasp domain is found at 115 to 305 (ELAAQQLGVR…EFELHLRAIL (191 aa)). Positions 264 and 276 each coordinate Mg(2+). Residues Asp-283, Lys-353, and 360 to 361 (RR) each bind N(1)-(5-phospho-beta-D-ribosyl)glycinamide.

The protein belongs to the PurK/PurT family. Homodimer.

It carries out the reaction N(1)-(5-phospho-beta-D-ribosyl)glycinamide + formate + ATP = N(2)-formyl-N(1)-(5-phospho-beta-D-ribosyl)glycinamide + ADP + phosphate + H(+). It functions in the pathway purine metabolism; IMP biosynthesis via de novo pathway; N(2)-formyl-N(1)-(5-phospho-D-ribosyl)glycinamide from N(1)-(5-phospho-D-ribosyl)glycinamide (formate route): step 1/1. Involved in the de novo purine biosynthesis. Catalyzes the transfer of formate to 5-phospho-ribosyl-glycinamide (GAR), producing 5-phospho-ribosyl-N-formylglycinamide (FGAR). Formate is provided by PurU via hydrolysis of 10-formyl-tetrahydrofolate. This Synechocystis sp. (strain ATCC 27184 / PCC 6803 / Kazusa) protein is Formate-dependent phosphoribosylglycinamide formyltransferase.